We begin with the raw amino-acid sequence, 470 residues long: Crh-like protein UTR2 (470 aa).

The first 23 residues, M1–A23, serve as a signal peptide directing secretion. Residues C58 and C69 are joined by a disulfide bond. N-linked (GlcNAc...) asparagine glycosylation is found at N65, N100, and N125. Positions S95–S282 constitute a GH16 domain. E168 (nucleophile) is an active-site residue. E172 (proton donor) is an active-site residue. Residue E172 participates in chitin binding. N-linked (GlcNAc...) asparagine glycans are attached at residues N177, N194, N198, N202, N235, and N239. Positions 259 and 270 each coordinate chitin. 2 N-linked (GlcNAc...) asparagine glycosylation sites follow: N314 and N327. The segment at S347 to A446 is disordered. Composition is skewed to low complexity over residues T370–V384 and T392–A408. Polar residues predominate over residues K409 to D418. Low complexity predominate over residues T433–A446. Residue S440 is the site of GPI-anchor amidated serine attachment. Residues S441 to M470 constitute a propeptide, removed in mature form. An N-linked (GlcNAc...) asparagine glycan is attached at N450.

It belongs to the glycosyl hydrolase 16 family. CRH1 subfamily. The GPI-anchor is attached to the protein in the endoplasmic reticulum and serves to target the protein to the cell surface. There, the glucosamine-inositol phospholipid moiety is cleaved off and the GPI-modified mannoprotein is covalently attached via its lipidless GPI glycan remnant to the 1,6-beta-glucan of the outer cell wall layer.

It localises to the secreted. Its subcellular location is the cell wall. It is found in the membrane. The catalysed reaction is Random endo-hydrolysis of N-acetyl-beta-D-glucosaminide (1-&gt;4)-beta-linkages in chitin and chitodextrins.. Its function is as follows. Dual chitinase/transglycosylase that plays a role in cell wall architecture. Chitinase and transglycosylase activities are coupled. Required for the polysaccharide cross-linking at the septa and the cell wall. More specifically, transfers chitin to 1,6-beta-glucan in the cell wall. Plays an important role in fungal pathogenesis via its functions in cell wall assembly and regeneration, filamentation, and adherence to host cells. Acts as a cell surface antigen in acute candidemia patients. The chain is Crh-like protein UTR2 from Candida albicans (strain SC5314 / ATCC MYA-2876) (Yeast).